The chain runs to 429 residues: Aspartate--tRNA(Asp/Asn) ligase (429 aa).

E166 lines the L-aspartate pocket. An aspartate region spans residues 188-191; sequence QLYK. Residue R210 coordinates L-aspartate. ATP contacts are provided by residues 210 to 212, 218 to 220, and E352; these read RAE and RHL. Mg(2+)-binding residues include E352 and S355. S355 and R359 together coordinate L-aspartate. 400 to 403 provides a ligand contact to ATP; that stretch reads GAER.

The protein belongs to the class-II aminoacyl-tRNA synthetase family. Type 2 subfamily. As to quaternary structure, homodimer. It depends on Mg(2+) as a cofactor.

The protein localises to the cytoplasm. The catalysed reaction is tRNA(Asx) + L-aspartate + ATP = L-aspartyl-tRNA(Asx) + AMP + diphosphate. Aspartyl-tRNA synthetase with relaxed tRNA specificity since it is able to aspartylate not only its cognate tRNA(Asp) but also tRNA(Asn). Reaction proceeds in two steps: L-aspartate is first activated by ATP to form Asp-AMP and then transferred to the acceptor end of tRNA(Asp/Asn). This chain is Aspartate--tRNA(Asp/Asn) ligase, found in Methanocorpusculum labreanum (strain ATCC 43576 / DSM 4855 / Z).